A 336-amino-acid chain; its full sequence is tRNA-dihydrouridine(20/20a) synthase (336 aa).

Residues 24 to 26 and glutamine 77 each bind FMN; that span reads PMM. Cysteine 107 acts as the Proton donor in catalysis. Residues lysine 146, histidine 178, 218 to 220, and 240 to 241 contribute to the FMN site; these read NGG and GR.

The protein belongs to the Dus family. DusA subfamily. FMN serves as cofactor.

The enzyme catalyses 5,6-dihydrouridine(20) in tRNA + NADP(+) = uridine(20) in tRNA + NADPH + H(+). It catalyses the reaction 5,6-dihydrouridine(20) in tRNA + NAD(+) = uridine(20) in tRNA + NADH + H(+). It carries out the reaction 5,6-dihydrouridine(20a) in tRNA + NADP(+) = uridine(20a) in tRNA + NADPH + H(+). The catalysed reaction is 5,6-dihydrouridine(20a) in tRNA + NAD(+) = uridine(20a) in tRNA + NADH + H(+). In terms of biological role, catalyzes the synthesis of 5,6-dihydrouridine (D), a modified base found in the D-loop of most tRNAs, via the reduction of the C5-C6 double bond in target uridines. Specifically modifies U20 and U20a in tRNAs. The sequence is that of tRNA-dihydrouridine(20/20a) synthase from Pseudomonas putida (strain ATCC 47054 / DSM 6125 / CFBP 8728 / NCIMB 11950 / KT2440).